A 92-amino-acid polypeptide reads, in one-letter code: UPF0250 protein COSY_0496 (92 aa).

This sequence belongs to the UPF0250 family.

In Vesicomyosocius okutanii subsp. Calyptogena okutanii (strain HA), this protein is UPF0250 protein COSY_0496.